We begin with the raw amino-acid sequence, 940 residues long: MSDHTNPPSAPPDDDPNGGSLLMPVTLEEEMSRSYLDYAMSVIVSRALPDARDGLKPVHRRILYGMQESGYTADKPYRKSARINGDVMGKYHPHGDAAIYDALVRLAQPFSLRVPLIDGQGNFGSMDGDPAAAPRYTEARLARSASFLLNDIDRDTVDFQPNYDDSEMEPRVLPASYPNLLVNGADGIAVGMATKIPTHNPTEVIDATLAMIDNPDITLDELMTVIPGPDFPTGGLILGRSGIRSAFETGKGSITVRARTDFEEVRGGRQAIVISEIPYQVNKATLQERMAELVRAKQIEGISDIRDESDRSGVRVVIELKRDATPDVVLNHLFRFTQLQISYGINMLALDGGQPRLMGLRDVLSTFIRFREDVILRRARFELNKARDRAHLLVGLAIAVANIDEVIRLIRQSPDSTSARIALMERDWPAADVAPLLTLIDDGGNVLTEAQTVRLTEVQARGILELRLQRLTGLERDKIHNEMQEVAARIGELLEIIGSHIRRMEVMREELAVIRAELNSPRRSEINDSLADQDDESLIEPGQMVVTITRDGFIKRTPLDVFRQQHRGGRGRAAASMRGDDIVTRSFNAHTHQWVLFFSSGGKAYRQKVWRLPEAGPTAKGRALVNLLPELGSDGITAVLPLPQDESLWEGLHLVFATASGGIRRNRLSDFKNVRASGLIAMKLDEGDRLIGVATCREGDDIMLASRLGRCIRFQANEDTLRVFAGRESSGVRGMKLAQGDEVISLSVLRHVEATPEERAAYLRYASARRRSAAGEEDQIDAEVMEADDSEVTVDDTALSPERIAGLEEAEEFLLTVTIAGFGKRSSAYDYRVSGRGGQGIANINLAPRNGRAVAATFPVRPGDDVMLVTDAGRLIRVPADQVRITGRSTMGVTLFRVDKDEVVTSVFPVLETESVDDNGDDADSVAPAAPDGQVTDSDD.

Residues methionine 1–leucine 22 are disordered. Residues leucine 48 to leucine 538 form the Topo IIA-type catalytic domain. Catalysis depends on tyrosine 136, which acts as the O-(5'-phospho-DNA)-tyrosine intermediate. Residues glutamine 565–glycine 571 carry the GyrA-box motif. Positions glutamate 914–aspartate 924 are enriched in acidic residues. Positions glutamate 914–aspartate 940 are disordered.

It belongs to the type II topoisomerase GyrA/ParC subunit family. As to quaternary structure, heterotetramer, composed of two GyrA and two GyrB chains. In the heterotetramer, GyrA contains the active site tyrosine that forms a transient covalent intermediate with DNA, while GyrB binds cofactors and catalyzes ATP hydrolysis.

It is found in the cytoplasm. It carries out the reaction ATP-dependent breakage, passage and rejoining of double-stranded DNA.. Its function is as follows. A type II topoisomerase that negatively supercoils closed circular double-stranded (ds) DNA in an ATP-dependent manner to modulate DNA topology and maintain chromosomes in an underwound state. Negative supercoiling favors strand separation, and DNA replication, transcription, recombination and repair, all of which involve strand separation. Also able to catalyze the interconversion of other topological isomers of dsDNA rings, including catenanes and knotted rings. Type II topoisomerases break and join 2 DNA strands simultaneously in an ATP-dependent manner. In Granulibacter bethesdensis (strain ATCC BAA-1260 / CGDNIH1), this protein is DNA gyrase subunit A.